The sequence spans 238 residues: NADH-quinone oxidoreductase subunit C (238 aa).

The span at 1-11 shows a compositional bias: polar residues; the sequence is MSTSNGSANGT. Residues 1-20 form a disordered region; the sequence is MSTSNGSANGTNGVGLPRGD.

It belongs to the complex I 30 kDa subunit family. NDH-1 is composed of 14 different subunits. Subunits NuoB, C, D, E, F, and G constitute the peripheral sector of the complex.

The protein resides in the cell membrane. It catalyses the reaction a quinone + NADH + 5 H(+)(in) = a quinol + NAD(+) + 4 H(+)(out). Functionally, NDH-1 shuttles electrons from NADH, via FMN and iron-sulfur (Fe-S) centers, to quinones in the respiratory chain. The immediate electron acceptor for the enzyme in this species is believed to be a menaquinone. Couples the redox reaction to proton translocation (for every two electrons transferred, four hydrogen ions are translocated across the cytoplasmic membrane), and thus conserves the redox energy in a proton gradient. The protein is NADH-quinone oxidoreductase subunit C of Mycolicibacterium smegmatis (strain ATCC 700084 / mc(2)155) (Mycobacterium smegmatis).